The primary structure comprises 118 residues: UPF0295 protein BT9727_0449 (118 aa).

2 helical membrane-spanning segments follow: residues 12–32 (IRTF…LGVF) and 43–63 (FMMV…WIGM).

Belongs to the UPF0295 family.

The protein resides in the cell membrane. The sequence is that of UPF0295 protein BT9727_0449 from Bacillus thuringiensis subsp. konkukian (strain 97-27).